We begin with the raw amino-acid sequence, 242 residues long: Probable transcriptional regulatory protein PXO_01555 (242 aa).

The protein belongs to the TACO1 family.

The protein localises to the cytoplasm. The chain is Probable transcriptional regulatory protein PXO_01555 from Xanthomonas oryzae pv. oryzae (strain PXO99A).